The sequence spans 178 residues: Large ribosomal subunit protein uL6 (178 aa).

The protein belongs to the universal ribosomal protein uL6 family. As to quaternary structure, part of the 50S ribosomal subunit.

In terms of biological role, this protein binds to the 23S rRNA, and is important in its secondary structure. It is located near the subunit interface in the base of the L7/L12 stalk, and near the tRNA binding site of the peptidyltransferase center. The protein is Large ribosomal subunit protein uL6 of Opitutus terrae (strain DSM 11246 / JCM 15787 / PB90-1).